Here is a 305-residue protein sequence, read N- to C-terminus: Ribosomal RNA small subunit methyltransferase H (305 aa).

Residues Gly47 to His49, Asp66, Phe93, Asp108, and Gln115 each bind S-adenosyl-L-methionine.

The protein belongs to the methyltransferase superfamily. RsmH family.

Its subcellular location is the cytoplasm. It catalyses the reaction cytidine(1402) in 16S rRNA + S-adenosyl-L-methionine = N(4)-methylcytidine(1402) in 16S rRNA + S-adenosyl-L-homocysteine + H(+). Specifically methylates the N4 position of cytidine in position 1402 (C1402) of 16S rRNA. This Prochlorococcus marinus (strain MIT 9211) protein is Ribosomal RNA small subunit methyltransferase H.